A 205-amino-acid polypeptide reads, in one-letter code: Phosphoribosyl-dephospho-CoA transferase (205 aa).

Catalysis depends on residues Asp134 and Asp136.

This sequence belongs to the MdcG family.

The enzyme catalyses apo-[malonate decarboxylase ACP] + 2'-(5''-triphospho-alpha-D-ribosyl)-3'-dephospho-CoA = holo-[malonate decarboxylase ACP] + diphosphate. Transfers 2'-(5-triphosphoribosyl)-3'-dephosphocoenzyme-A to the apo-[acyl-carrier-protein] of the malonate decarboxylase to yield holo-[acyl-carrier-protein]. The protein is Phosphoribosyl-dephospho-CoA transferase of Klebsiella pneumoniae (strain 342).